The primary structure comprises 40 residues: Photosystem II reaction center protein J (40 aa).

Met2 carries the post-translational modification N-acetylmethionine. At 2-11 (MSEGGRIPLW) the chain is on the cytoplasmic side. A helical transmembrane segment spans residues 12–26 (IVATVAGMGVIVIVG). At 27–40 (LFFYGAYAGLGSSL) the chain is on the lumenal side.

This sequence belongs to the PsbJ family. In terms of assembly, PSII is composed of 1 copy each of membrane proteins PsbA, PsbB, PsbC, PsbD, PsbE, PsbF, PsbH, PsbI, PsbJ, PsbK, PsbL, PsbM, PsbT, PsbX, PsbY, PsbZ, Psb30/Ycf12, peripheral proteins PsbO, CyanoQ (PsbQ), PsbU, PsbV and a large number of cofactors. It forms dimeric complexes. The cofactor is PSII binds multiple chlorophylls, carotenoids and specific lipids..

It is found in the cellular thylakoid membrane. One of the components of the core complex of photosystem II (PSII). PSII is a light-driven water:plastoquinone oxidoreductase that uses light energy to abstract electrons from H(2)O, generating O(2) and a proton gradient subsequently used for ATP formation. It consists of a core antenna complex that captures photons, and an electron transfer chain that converts photonic excitation into a charge separation. Its function is as follows. May play a regulatory role in PSII biogenesis. The polypeptide is Photosystem II reaction center protein J (Thermosynechococcus vestitus (strain NIES-2133 / IAM M-273 / BP-1)).